The chain runs to 201 residues: UPF0301 protein RHECIAT_CH0001061 (201 aa).

The protein belongs to the UPF0301 (AlgH) family.

This chain is UPF0301 protein RHECIAT_CH0001061, found in Rhizobium etli (strain CIAT 652).